The following is a 122-amino-acid chain: UPF0482 protein Spro_2288 (122 aa).

A signal peptide spans 1–31 (MKTLSTQRLLRGMLPVAMLMLMGAWQAPALA). The segment at 46 to 71 (SNSGAMSTEAARQSKQQFNDTKSLRN) is disordered.

The protein belongs to the UPF0482 family.

In Serratia proteamaculans (strain 568), this protein is UPF0482 protein Spro_2288.